Consider the following 296-residue polypeptide: Acetylglutamate kinase (296 aa).

Residues 69-70, R91, and N193 each bind substrate; that span reads GG.

The protein belongs to the acetylglutamate kinase family. ArgB subfamily.

It localises to the cytoplasm. It catalyses the reaction N-acetyl-L-glutamate + ATP = N-acetyl-L-glutamyl 5-phosphate + ADP. Its pathway is amino-acid biosynthesis; L-arginine biosynthesis; N(2)-acetyl-L-ornithine from L-glutamate: step 2/4. Functionally, catalyzes the ATP-dependent phosphorylation of N-acetyl-L-glutamate. The protein is Acetylglutamate kinase of Albidiferax ferrireducens (strain ATCC BAA-621 / DSM 15236 / T118) (Rhodoferax ferrireducens).